A 347-amino-acid polypeptide reads, in one-letter code: Aspartate-semialdehyde dehydrogenase (347 aa).

Residues 13 to 16 (TGAV) and 41 to 42 (RS) contribute to the NADP(+) site. Arginine 101 is a binding site for phosphate. The Acyl-thioester intermediate role is filled by cysteine 132. Glutamine 159 is a binding site for substrate. Position 162–163 (162–163 (SG)) interacts with NADP(+). Residue lysine 216 participates in phosphate binding. Substrate is bound at residue arginine 238. Histidine 245 serves as the catalytic Proton acceptor. Position 319 (asparagine 319) interacts with NADP(+).

It belongs to the aspartate-semialdehyde dehydrogenase family. In terms of assembly, homodimer.

It carries out the reaction L-aspartate 4-semialdehyde + phosphate + NADP(+) = 4-phospho-L-aspartate + NADPH + H(+). It participates in amino-acid biosynthesis; L-lysine biosynthesis via DAP pathway; (S)-tetrahydrodipicolinate from L-aspartate: step 2/4. It functions in the pathway amino-acid biosynthesis; L-methionine biosynthesis via de novo pathway; L-homoserine from L-aspartate: step 2/3. Its pathway is amino-acid biosynthesis; L-threonine biosynthesis; L-threonine from L-aspartate: step 2/5. Functionally, catalyzes the NADPH-dependent formation of L-aspartate-semialdehyde (L-ASA) by the reductive dephosphorylation of L-aspartyl-4-phosphate. In Legionella pneumophila, this protein is Aspartate-semialdehyde dehydrogenase.